The primary structure comprises 660 residues: Peroxisomal acyl-coenzyme A oxidase 1 (660 aa).

Ser26 carries the phosphoserine modification. An N6-succinyllysine mark is found at Lys89 and Lys90. Thr139 and Gly178 together coordinate FAD. Lys216 bears the N6-acetyllysine mark. The residue at position 241 (Lys241) is an N6-succinyllysine. Residues Lys255, Lys267, and Lys272 each carry the N6-acetyllysine modification. At Lys349 the chain carries N6-succinyllysine. Catalysis depends on Glu421, which acts as the Proton acceptor. An N6-acetyllysine; alternate mark is found at Lys437 and Lys446. 2 positions are modified to N6-succinyllysine; alternate: Lys437 and Lys446. N6-acetyllysine is present on residues Lys500 and Lys504. Lys512 carries the N6-acetyllysine; alternate modification. At Lys512 the chain carries N6-succinyllysine; alternate. An N6-succinyllysine modification is found at Lys542. An N6-acetyllysine; alternate modification is found at Lys637. Position 637 is an N6-succinyllysine; alternate (Lys637). Lys643 is subject to N6-succinyllysine. Ser649 carries the phosphoserine modification. Lys651 is modified (N6-acetyllysine). Position 654 is an N6-succinyllysine (Lys654). Positions 658–660 (SKL) match the Microbody targeting signal motif.

It belongs to the acyl-CoA oxidase family. As to quaternary structure, homodimer. Interacts with LONP2. FAD is required as a cofactor. Widely expressed with highest levels of isoform 1 and isoform 2 detected in testis. Isoform 1 is expressed at higher levels than isoform 2 in liver and kidney while isoform 2 levels are higher in brain, lung, muscle, white adipose tissue and testis. Levels are almost equal in heart.

Its subcellular location is the peroxisome. The enzyme catalyses a 2,3-saturated acyl-CoA + O2 = a (2E)-enoyl-CoA + H2O2. It catalyses the reaction hexadecanoyl-CoA + O2 = (2E)-hexadecenoyl-CoA + H2O2. It carries out the reaction dodecanoyl-CoA + O2 = (2E)-dodecenoyl-CoA + H2O2. The catalysed reaction is octanoyl-CoA + O2 = (2E)-octenoyl-CoA + H2O2. The enzyme catalyses decanoyl-CoA + O2 = (2E)-decenoyl-CoA + H2O2. It catalyses the reaction tetradecanoyl-CoA + O2 = (2E)-tetradecenoyl-CoA + H2O2. It carries out the reaction hexadecanedioyl-CoA + O2 = (2E)-hexadecenedioyl-CoA + H2O2. The catalysed reaction is (5Z,8Z,11Z,14Z,17Z)-eicosapentaenoyl-CoA + O2 = (2E,5Z,8Z,11Z,14Z,17Z)-icosahexaenoyl-CoA + H2O2. The enzyme catalyses tetracosanoyl-CoA + O2 = (2E)-tetracosenoyl-CoA + H2O2. It catalyses the reaction glutaryl-CoA + O2 = (2E)-glutaconyl-CoA + H2O2. It carries out the reaction hexanoyl-CoA + O2 = (2E)-hexenoyl-CoA + H2O2. The catalysed reaction is octadecanoyl-CoA + O2 = (2E)-octadecenoyl-CoA + H2O2. The enzyme catalyses (6Z,9Z,12Z,15Z,18Z,21Z)-tetracosahexaenoyl-CoA + O2 = (2E,6Z,9Z,12Z,15Z,18Z,21Z)-tetracosaheptaenoyl-CoA + H2O2. The protein operates within lipid metabolism; peroxisomal fatty acid beta-oxidation. In terms of biological role, involved in the initial and rate-limiting step of peroxisomal beta-oxidation of straight-chain saturated and unsaturated very-long-chain fatty acids. Catalyzes the desaturation of fatty acyl-CoAs such as palmitoyl-CoA (hexadecanoyl-CoA) to 2-trans-enoyl-CoAs ((2E)-enoyl-CoAs) such as (2E)-hexadecenoyl-CoA, and donates electrons directly to molecular oxygen (O(2)), thereby producing hydrogen peroxide (H(2)O(2)). Functionally, shows highest activity against medium-chain fatty acyl-CoAs. Shows optimum activity with a chain length of 10 carbons (decanoyl-CoA) in vitro. Is active against a much broader range of substrates and shows activity towards long-chain fatty acyl-CoAs. The protein is Peroxisomal acyl-coenzyme A oxidase 1 of Homo sapiens (Human).